A 61-amino-acid chain; its full sequence is Conotoxin Vn5.3 (61 aa).

Residues 1–19 (MHCLPVFVILLLLIASAPG) form the signal peptide. Residues 20–50 (VDVQPKTKNFMTRASLRDFAKKTPKRLSKLR) constitute a propeptide that is removed on maturation.

Belongs to the conotoxin T superfamily. In terms of processing, contains 2 disulfide bonds that can be either 'C1-C3, C2-C4' or 'C1-C4, C2-C3', since these disulfide connectivities have been observed for conotoxins with cysteine framework V (for examples, see AC P0DQQ7 and AC P81755). In terms of tissue distribution, expressed by the venom duct.

The protein localises to the secreted. The sequence is that of Conotoxin Vn5.3 from Conus ventricosus (Mediterranean cone).